Consider the following 206-residue polypeptide: Pyridoxine/pyridoxamine 5'-phosphate oxidase (206 aa).

FMN is bound by residues Arg-53 to Lys-58, Tyr-68 to Thr-69, Lys-75, and Gln-97. Substrate is bound at residue Lys-58. Substrate is bound by residues Tyr-115, Arg-119, and Ser-123. FMN-binding positions include Gln-132–Ser-133 and Trp-177. Arg-183–His-185 is a substrate binding site. Arg-187 is a binding site for FMN.

Belongs to the pyridoxamine 5'-phosphate oxidase family. Homodimer. FMN is required as a cofactor.

It carries out the reaction pyridoxamine 5'-phosphate + O2 + H2O = pyridoxal 5'-phosphate + H2O2 + NH4(+). The enzyme catalyses pyridoxine 5'-phosphate + O2 = pyridoxal 5'-phosphate + H2O2. The protein operates within cofactor metabolism; pyridoxal 5'-phosphate salvage; pyridoxal 5'-phosphate from pyridoxamine 5'-phosphate: step 1/1. Its pathway is cofactor metabolism; pyridoxal 5'-phosphate salvage; pyridoxal 5'-phosphate from pyridoxine 5'-phosphate: step 1/1. Its function is as follows. Catalyzes the oxidation of either pyridoxine 5'-phosphate (PNP) or pyridoxamine 5'-phosphate (PMP) into pyridoxal 5'-phosphate (PLP). In Rhizobium johnstonii (strain DSM 114642 / LMG 32736 / 3841) (Rhizobium leguminosarum bv. viciae), this protein is Pyridoxine/pyridoxamine 5'-phosphate oxidase.